The following is a 621-amino-acid chain: MQHADALYLFNEGRNNQAYRLLGAHADISGTTFRVWAPNASRVSVVGDFNGWHGDVHQLHPLGESGVWEIAVAEAHTGNLYRFEITNRHTGDKLIKSDPYGRGFELRPGSAAYVVPPSMHVWGDADWLQQRAGWDWQQAPVNIYEVHPGSWMRHPDGKPYLWGELAERLIPYALAQGYTHLELLPITEHPLDESWGYQTTGYFAPTSRYGSADELRAFVDACHQAGLGVLLDWVPGHFPQDDWALARFDGTALYEHEDPRLGLHADWGTHIFNYGRHEVRSFLMSSAHWWLSEFHFDGLRVDAVASMLYLDYSRKHGEWLPNKFGGRENLEAIDFLKQLNAMVHGDFPGALTIAEESTAWPMVSRPTYVGGLGFSMKWNMGWMNDSLRYFHRDPIYRRWHHSELTFGQIYAYSENYVLPFSHDEVVHGKGSLLGKMPGDTWQRYANLRLLLAWQVLTPGKKLMFMGCEFGQQGEWSEGRELDWGSLANPENAAAQRLSADLNRLYRDLPALHTQDFSALGFEWIDCNDSEHSVLSWLRWGKDGSFVVVVFNFTPVPQPAYRLGVPEAGTYVELLNTDSAFYGGSNLGNGGALTATKGEWMGRPANLEVTIPPLGAVVLRRE.

The active-site Nucleophile is the Asp-302. Glu-355 (proton donor) is an active-site residue.

The protein belongs to the glycosyl hydrolase 13 family. GlgB subfamily. As to quaternary structure, monomer.

The enzyme catalyses Transfers a segment of a (1-&gt;4)-alpha-D-glucan chain to a primary hydroxy group in a similar glucan chain.. It participates in glycan biosynthesis; glycogen biosynthesis. Functionally, catalyzes the formation of the alpha-1,6-glucosidic linkages in glycogen by scission of a 1,4-alpha-linked oligosaccharide from growing alpha-1,4-glucan chains and the subsequent attachment of the oligosaccharide to the alpha-1,6 position. The chain is 1,4-alpha-glucan branching enzyme GlgB from Dechloromonas aromatica (strain RCB).